The sequence spans 223 residues: N-terminal Xaa-Pro-Lys N-methyltransferase 1 (223 aa).

Met-1 is modified (N-acetylmethionine). N-acetylthreonine; in N-terminal Xaa-Pro-Lys N-methyltransferase 1, N-terminally processed is present on Thr-2. S-adenosyl-L-methionine contacts are provided by residues Gly-69, Arg-74, 91–93 (DVT), 119–120 (LQ), and Gln-135.

The protein belongs to the methyltransferase superfamily. NTM1 family.

The protein localises to the nucleus. The enzyme catalyses N-terminal L-alanyl-L-prolyl-L-lysyl-[protein] + 3 S-adenosyl-L-methionine = N-terminal N,N,N-trimethyl-L-alanyl-L-prolyl-L-lysyl-[protein] + 3 S-adenosyl-L-homocysteine + 3 H(+). It carries out the reaction N-terminal L-seryl-L-prolyl-L-lysyl-[protein] + 3 S-adenosyl-L-methionine = N-terminal N,N,N-trimethyl-L-seryl-L-prolyl-L-lysyl-[protein] + 3 S-adenosyl-L-homocysteine + 3 H(+). The catalysed reaction is N-terminal L-prolyl-L-prolyl-L-lysyl-[protein] + 2 S-adenosyl-L-methionine = N-terminal N,N-dimethyl-L-prolyl-L-prolyl-L-lysyl-[protein] + 2 S-adenosyl-L-homocysteine + 2 H(+). Its function is as follows. Distributive alpha-N-methyltransferase that methylates the N-terminus of target proteins containing the N-terminal motif [Ala/Gly/Pro/Ser]-Pro-Lys when the initiator Met is cleaved. Specifically catalyzes mono-, di- or tri-methylation of the exposed alpha-amino group of the Ala, Gly or Ser residue in the [Ala/Gly/Ser]-Pro-Lys motif and mono- or di-methylation of Pro in the Pro-Pro-Lys motif. Some of the substrates may be primed by NTMT2-mediated monomethylation. Catalyzes the trimethylation of the N-terminal Gly in CENPA (after removal of Met-1). Responsible for the N-terminal methylation of KLHL31, MYL2, MYL3, RB1, RCC1, RPL23A and SET. Required during mitosis for normal bipolar spindle formation and chromosome segregation via its action on RCC1. In Mus musculus (Mouse), this protein is N-terminal Xaa-Pro-Lys N-methyltransferase 1 (Ntmt1).